Here is a 205-residue protein sequence, read N- to C-terminus: ATP-dependent Clp protease proteolytic subunit (205 aa).

Catalysis depends on Ser-98, which acts as the Nucleophile. The active site involves His-123.

It belongs to the peptidase S14 family. As to quaternary structure, fourteen ClpP subunits assemble into 2 heptameric rings which stack back to back to give a disk-like structure with a central cavity, resembling the structure of eukaryotic proteasomes.

Its subcellular location is the cytoplasm. It carries out the reaction Hydrolysis of proteins to small peptides in the presence of ATP and magnesium. alpha-casein is the usual test substrate. In the absence of ATP, only oligopeptides shorter than five residues are hydrolyzed (such as succinyl-Leu-Tyr-|-NHMec, and Leu-Tyr-Leu-|-Tyr-Trp, in which cleavage of the -Tyr-|-Leu- and -Tyr-|-Trp bonds also occurs).. Its function is as follows. Cleaves peptides in various proteins in a process that requires ATP hydrolysis. Has a chymotrypsin-like activity. Plays a major role in the degradation of misfolded proteins. This chain is ATP-dependent Clp protease proteolytic subunit, found in Desulforapulum autotrophicum (strain ATCC 43914 / DSM 3382 / VKM B-1955 / HRM2) (Desulfobacterium autotrophicum).